The sequence spans 317 residues: Ribosomal RNA small subunit methyltransferase H (317 aa).

S-adenosyl-L-methionine-binding positions include 30–32 (GGH), D50, Y74, D95, and Q102.

The protein belongs to the methyltransferase superfamily. RsmH family.

The protein resides in the cytoplasm. The catalysed reaction is cytidine(1402) in 16S rRNA + S-adenosyl-L-methionine = N(4)-methylcytidine(1402) in 16S rRNA + S-adenosyl-L-homocysteine + H(+). Specifically methylates the N4 position of cytidine in position 1402 (C1402) of 16S rRNA. This Nitrosomonas europaea (strain ATCC 19718 / CIP 103999 / KCTC 2705 / NBRC 14298) protein is Ribosomal RNA small subunit methyltransferase H.